The following is a 208-amino-acid chain: Large ribosomal subunit protein uL3 (208 aa).

Residues 116-148 (GFQGVIKRHGQSRGPMAHGSRYHRRPGSMGPVA) are disordered.

Belongs to the universal ribosomal protein uL3 family. As to quaternary structure, part of the 50S ribosomal subunit. Forms a cluster with proteins L14 and L19.

One of the primary rRNA binding proteins, it binds directly near the 3'-end of the 23S rRNA, where it nucleates assembly of the 50S subunit. The polypeptide is Large ribosomal subunit protein uL3 (Streptococcus pyogenes serotype M6 (strain ATCC BAA-946 / MGAS10394)).